The following is a 442-amino-acid chain: PTS system oligo-beta-mannoside-specific EIIC component (442 aa).

Residues 5–411 form the PTS EIIC type-3 domain; sequence ISQFLVPIAG…LIVFVIWFPF (407 aa). Transmembrane regions (helical) follow at residues 28–48, 67–87, 97–117, 138–157, 177–197, 205–225, 228–248, 286–306, 329–349, 365–385, and 391–411; these read AFML…LTNL, FGIA…FGIG, EAVF…PFII, GMFL…RRIV, FAAL…NVMV, MHDV…SGII, LIAV…QIII, TVGM…LIFM, PIIF…WVLA, LVPP…INGI, and IMGG…WFPF.

The protein resides in the cell membrane. Its function is as follows. The phosphoenolpyruvate-dependent sugar phosphotransferase system (sugar PTS), a major carbohydrate active transport system, catalyzes the phosphorylation of incoming sugar substrates concomitantly with their translocation across the cell membrane. The enzyme II GmuABC PTS system is involved in the transport of oligo-glucomannans such as cellobiose or mannobiose. This chain is PTS system oligo-beta-mannoside-specific EIIC component, found in Bacillus subtilis (strain 168).